The chain runs to 161 residues: Allophycocyanin alpha subunit (161 aa).

Cys81 is a (2R,3E)-phycocyanobilin binding site.

The protein belongs to the phycobiliprotein family. In terms of assembly, heterodimer of an alpha and a beta chain. Contains one covalently linked phycocyanobilin chromophore. The chromophore on position 81 is added by the phycocyanobilin lyase CpcUS.

It is found in the cellular thylakoid membrane. Its function is as follows. Light-harvesting photosynthetic bile pigment-protein from the phycobiliprotein complex. Allophycocyanin has a maximum absorption at approximately 650 nanometers. This is Allophycocyanin alpha subunit (apcA) from Picosynechococcus sp. (strain ATCC 27264 / PCC 7002 / PR-6) (Agmenellum quadruplicatum).